A 578-amino-acid polypeptide reads, in one-letter code: CTP synthase 2 (578 aa).

Residues 305 to 564 (KIALVGKYTN…VAAASGTLGD (260 aa)) enclose the Glutamine amidotransferase type-1 domain. Active-site for GATase activity residues include Cys-404, His-537, and Glu-539.

This sequence belongs to the CTP synthase family. As to quaternary structure, homodimer. Oligomerizes to a tetramer in the presence of its substrates UTP and ATP. Mg(2+) serves as cofactor.

Its subcellular location is the cytoplasm. It catalyses the reaction UTP + L-glutamine + ATP + H2O = CTP + L-glutamate + ADP + phosphate + 2 H(+). The protein operates within pyrimidine metabolism; CTP biosynthesis via de novo pathway; CTP from UDP: step 2/2. Its activity is regulated as follows. Activated by GTP. Subject to allosteric product inhibition by CTP. Inhibited by p-chloromercuriphenylsulfonic acid, N-ethylmaleimide and cyclopentenylcytosine (CPEC). In terms of biological role, catalyzes the ATP-dependent amination of UTP to CTP with either L-glutamine or ammonia as the source of nitrogen. Plays an important role in the regulation of phospholipid synthesis. This is CTP synthase 2 (URA8) from Saccharomyces cerevisiae (strain YJM789) (Baker's yeast).